We begin with the raw amino-acid sequence, 442 residues long: Ribosomal protein uS12 methylthiotransferase RimO (442 aa).

Residues 13-129 (RSIFLLSLGC…ILNILGTAYD (117 aa)) form the MTTase N-terminal domain. Positions 22, 58, 92, 153, 157, and 160 each coordinate [4Fe-4S] cluster. A Radical SAM core domain is found at 139–369 (LSPSHYAWLK…MELQEGISEK (231 aa)). The 68-residue stretch at 372–439 (RALEEKALKV…AYELVGRIKN (68 aa)) folds into the TRAM domain.

Belongs to the methylthiotransferase family. RimO subfamily. The cofactor is [4Fe-4S] cluster.

The protein resides in the cytoplasm. The enzyme catalyses L-aspartate(89)-[ribosomal protein uS12]-hydrogen + (sulfur carrier)-SH + AH2 + 2 S-adenosyl-L-methionine = 3-methylsulfanyl-L-aspartate(89)-[ribosomal protein uS12]-hydrogen + (sulfur carrier)-H + 5'-deoxyadenosine + L-methionine + A + S-adenosyl-L-homocysteine + 2 H(+). Its function is as follows. Catalyzes the methylthiolation of an aspartic acid residue of ribosomal protein uS12. This Chlorobium phaeobacteroides (strain BS1) protein is Ribosomal protein uS12 methylthiotransferase RimO.